The primary structure comprises 123 residues: Small ribosomal subunit protein uS13c (123 aa).

Residues 89–123 (RGKRHRNNLPVRGQRTRTNARSRRGSKKTVTGKKK) are disordered. Basic residues predominate over residues 102–123 (QRTRTNARSRRGSKKTVTGKKK).

Belongs to the universal ribosomal protein uS13 family. Part of the 30S ribosomal subunit.

The protein localises to the plastid. The protein resides in the chloroplast. In terms of biological role, located at the top of the head of the 30S subunit, it contacts several helices of the 16S rRNA. In Phaeodactylum tricornutum (strain CCAP 1055/1), this protein is Small ribosomal subunit protein uS13c.